The primary structure comprises 287 residues: ATP synthase gamma chain (287 aa).

Belongs to the ATPase gamma chain family. In terms of assembly, F-type ATPases have 2 components, CF(1) - the catalytic core - and CF(0) - the membrane proton channel. CF(1) has five subunits: alpha(3), beta(3), gamma(1), delta(1), epsilon(1). CF(0) has three main subunits: a, b and c.

It localises to the cell inner membrane. Its function is as follows. Produces ATP from ADP in the presence of a proton gradient across the membrane. The gamma chain is believed to be important in regulating ATPase activity and the flow of protons through the CF(0) complex. The protein is ATP synthase gamma chain of Tolumonas auensis (strain DSM 9187 / NBRC 110442 / TA 4).